Consider the following 1671-residue polypeptide: Kinesin-like protein unc-104 (1671 aa).

The 349-residue stretch at 3-351 (SVKVAVRVRP…LRYADRAKQI (349 aa)) folds into the Kinesin motor domain. 97–104 (GQTGAGKS) contributes to the ATP binding site. A coiled-coil region spans residues 358 to 437 (NEDANAKLIR…IAELNETWEE (80 aa)). The disordered stretch occupies residues 391–413 (DELNKSTTGIKSPSKSRNRNGST). Residues 395-413 (KSTTGIKSPSKSRNRNGST) are compositionally biased toward polar residues. The region spanning 500-566 (TRLGTHEANV…LKTGSRVILG (67 aa)) is the FHA domain. Positions 577–674 (EQARELREKI…EEQSMTMSMY (98 aa)) form a coiled coil. Residues 949–973 (DVDSGRGIDSNSASDCPENAEEPGE) are disordered. A PH domain is found at 1538-1636 (VVARKGLLNV…WLYAINPLLA (99 aa)).

This sequence belongs to the TRAFAC class myosin-kinesin ATPase superfamily. Kinesin family. Unc-104 subfamily. Monomer.

The protein resides in the cytoplasm. It localises to the cytoskeleton. Required for presynaptic maturation, has a role in axonal transport of dense-core vesicles carrying synaptic vesicle precursors, components required for the morphological transformation of axonal growth cones to mature boutons. The chain is Kinesin-like protein unc-104 from Drosophila pseudoobscura pseudoobscura (Fruit fly).